We begin with the raw amino-acid sequence, 151 residues long: 3-hydroxyacyl-[acyl-carrier-protein] dehydratase FabZ (151 aa).

Residue histidine 54 is part of the active site.

Belongs to the thioester dehydratase family. FabZ subfamily.

Its subcellular location is the cytoplasm. The enzyme catalyses a (3R)-hydroxyacyl-[ACP] = a (2E)-enoyl-[ACP] + H2O. In terms of biological role, involved in unsaturated fatty acids biosynthesis. Catalyzes the dehydration of short chain beta-hydroxyacyl-ACPs and long chain saturated and unsaturated beta-hydroxyacyl-ACPs. The protein is 3-hydroxyacyl-[acyl-carrier-protein] dehydratase FabZ of Klebsiella pneumoniae (strain 342).